The chain runs to 132 residues: MSVNDPLGDMLTRIRNALMRNKRAVNTPASALRRRVLDVLKSEGYIRDYAEVEHASGLKEFEIELKYFEGDSVISEIKRISKPGRRVYSGVKDLPLVQNGLGIAILSTPKGVMSDSTARESNVGGEILCHVS.

It belongs to the universal ribosomal protein uS8 family. In terms of assembly, part of the 30S ribosomal subunit. Contacts proteins S5 and S12.

Functionally, one of the primary rRNA binding proteins, it binds directly to 16S rRNA central domain where it helps coordinate assembly of the platform of the 30S subunit. The protein is Small ribosomal subunit protein uS8 of Maricaulis maris (strain MCS10) (Caulobacter maris).